A 123-amino-acid polypeptide reads, in one-letter code: Protein Wnt-3 (123 aa).

Residue Ser1 is the site of O-palmitoleoyl serine; by PORCN attachment. A disulfide bridge connects residues Cys89 and Cys104. N-linked (GlcNAc...) asparagine glycosylation is present at Asn90.

The protein belongs to the Wnt family. Post-translationally, palmitoleoylation is required for efficient binding to frizzled receptors. Depalmitoleoylation leads to Wnt signaling pathway inhibition.

It is found in the secreted. The protein localises to the extracellular space. The protein resides in the extracellular matrix. In terms of biological role, ligand for members of the frizzled family of seven transmembrane receptors. Functions in the canonical Wnt signaling pathway that results in activation of transcription factors of the TCF/LEF family. Required for normal embryonic development. The polypeptide is Protein Wnt-3 (WNT-3) (Eptatretus stoutii (Pacific hagfish)).